The chain runs to 283 residues: Pantothenate synthetase (283 aa).

31 to 38 is an ATP binding site; sequence MGALHDGH. H38 functions as the Proton donor in the catalytic mechanism. Residue Q62 participates in (R)-pantoate binding. A beta-alanine-binding site is contributed by Q62. Residue 148 to 151 coordinates ATP; the sequence is GKKD. (R)-pantoate is bound at residue Q154. Residues V177 and 185-188 contribute to the ATP site; that span reads KSSR.

The protein belongs to the pantothenate synthetase family. As to quaternary structure, homodimer.

The protein localises to the cytoplasm. It catalyses the reaction (R)-pantoate + beta-alanine + ATP = (R)-pantothenate + AMP + diphosphate + H(+). It participates in cofactor biosynthesis; (R)-pantothenate biosynthesis; (R)-pantothenate from (R)-pantoate and beta-alanine: step 1/1. Its function is as follows. Catalyzes the condensation of pantoate with beta-alanine in an ATP-dependent reaction via a pantoyl-adenylate intermediate. The chain is Pantothenate synthetase from Staphylococcus aureus (strain USA300).